A 271-amino-acid chain; its full sequence is Proteasome inhibitor PI31 subunit (271 aa).

A2 is modified (N-acetylalanine). The tract at residues 2 to 150 is important for homodimerization and interaction with FBXO7; sequence AGLEVLFASA…PIHEQWEKAN (149 aa). Phosphoserine is present on S153. Omega-N-methylarginine is present on R205. Asymmetric dimethylarginine is present on R219. A disordered region spans residues 222–271; it reads IDPSSGLPNRLPPGAVPPGARFDPFGPIGTSPPGPNPDHLPPPGYDDMYL. R231 carries the post-translational modification Omega-N-methylarginine. The span at 251-265 shows a compositional bias: pro residues; that stretch reads TSPPGPNPDHLPPPG. The residue at position 252 (S252) is a Phosphoserine.

The protein belongs to the proteasome inhibitor PI31 family. As to quaternary structure, monomer and homodimer. Interacts with FBXO7. Interacts with the 20S proteasome.

Its subcellular location is the cytoplasm. The protein resides in the endoplasmic reticulum. Its function is as follows. Plays an important role in control of proteasome function. Inhibits the hydrolysis of protein and peptide substrates by the 20S proteasome. Also inhibits the activation of the proteasome by the proteasome regulatory proteins PA700 and PA28. This Homo sapiens (Human) protein is Proteasome inhibitor PI31 subunit (PSMF1).